Here is a 117-residue protein sequence, read N- to C-terminus: Large ribosomal subunit protein bL20 (117 aa).

It belongs to the bacterial ribosomal protein bL20 family.

In terms of biological role, binds directly to 23S ribosomal RNA and is necessary for the in vitro assembly process of the 50S ribosomal subunit. It is not involved in the protein synthesizing functions of that subunit. The polypeptide is Large ribosomal subunit protein bL20 (Geotalea daltonii (strain DSM 22248 / JCM 15807 / FRC-32) (Geobacter daltonii)).